Reading from the N-terminus, the 493-residue chain is Alpha-amylase-related protein (493 aa).

An N-terminal signal peptide occupies residues 1-19 (MFKFALALTLCLAGSLSLA). Gln20 carries the post-translational modification Pyrrolidone carboxylic acid. Cys47 and Cys103 are oxidised to a cystine. Ca(2+) is bound by residues Asn117, Gln168, and Asp177. An intrachain disulfide couples Cys156 to Cys170. Arg205 serves as a coordination point for chloride. The active-site Nucleophile is the Asp207. His211 lines the Ca(2+) pocket. The active-site Proton donor is Glu244. Asn307 and Arg342 together coordinate chloride. 3 disulfides stabilise this stretch: Cys375–Cys381, Cys417–Cys440, and Cys447–Cys459.

Belongs to the glycosyl hydrolase 13 family. As to quaternary structure, monomer. Ca(2+) is required as a cofactor. Chloride serves as cofactor.

It localises to the secreted. The enzyme catalyses Endohydrolysis of (1-&gt;4)-alpha-D-glucosidic linkages in polysaccharides containing three or more (1-&gt;4)-alpha-linked D-glucose units.. This Drosophila elegans (Fruit fly) protein is Alpha-amylase-related protein (Amyrel).